We begin with the raw amino-acid sequence, 466 residues long: 55 kDa erythrocyte membrane protein (466 aa).

Threonine 2 is modified (N-acetylthreonine). Residues serine 13 and serine 19 each carry the phosphoserine modification. The residue at position 49 (threonine 49) is a Phosphothreonine. 3 positions are modified to phosphoserine: serine 52, serine 57, and serine 110. Residues 71 to 152 (LIQFEKVTEE…MISLKVIPNQ (82 aa)) enclose the PDZ domain. The region spanning 158 to 228 (ALQMFMRAQF…PSPELQEWRV (71 aa)) is the SH3 domain. Phosphoserine is present on serine 243. Residues 268 to 466 (VVSYEEVVRL…PQWVPVSWVY (199 aa)) form an interaction with PALS1 region. Positions 282–451 (RKTLVLIGAS…TLKKLQEAFD (170 aa)) constitute a Guanylate kinase-like domain.

Belongs to the MAGUK family. As to quaternary structure, heterodimer with PALS1. Interacts with DLG5 and NF2. Interacts (via guanylate kinase-like domain) with WHRN (via third PDZ domain). Palmitoylated.

The protein localises to the cell membrane. It is found in the cell projection. The protein resides in the stereocilium. Its function is as follows. Essential regulator of neutrophil polarity. Regulates neutrophil polarization by regulating AKT1 phosphorylation through a mechanism that is independent of PIK3CG activity. The polypeptide is 55 kDa erythrocyte membrane protein (MPP1) (Pongo abelii (Sumatran orangutan)).